A 115-amino-acid chain; its full sequence is uncharacterized protein (115 aa).

The region spanning M1–E115 is the MSP domain.

This is an uncharacterized protein from Caenorhabditis elegans.